A 104-amino-acid polypeptide reads, in one-letter code: MGGYKGIKADGGKVNQAKQLAAKIAKDIEACQKQTQQLAEYIEGSDWEGQFANKVKDVLLIMAKFQEELVQPMADHQKAIDNLSQNLAKYDTLSIKQGLDRVNP.

Belongs to the WXG100 family. In terms of assembly, homodimer. When mixed with EsxA does not form heterodimers.

It is found in the secreted. Virulence factor that is important for the establishment of infection in the host. EsxB is required for EsxA synthesis as well as secretion. Mediates together with EsxA the release of S.aureus from the host cell. Also inhibits host cytokine production and thus modulates dendritic cell-mediated immunity. The chain is Type VII secretion system extracellular protein B from Staphylococcus aureus (strain Mu50 / ATCC 700699).